The primary structure comprises 88 residues: MAHKKGTGSTRNGRDSNAKRLGVKAYGGETVTAGSILIRQRGTSVLPGVNVGKGKDDTLFALTDGIVKFESIRRGLRNRKRINITATA.

Positions 1 to 24 are disordered; the sequence is MAHKKGTGSTRNGRDSNAKRLGVK.

This sequence belongs to the bacterial ribosomal protein bL27 family.

The protein is Large ribosomal subunit protein bL27 of Synechococcus sp. (strain CC9605).